The following is a 354-amino-acid chain: DNA polymerase IV (354 aa).

The UmuC domain maps to 3–188 (VIFVDFDYFF…LDIDEIPGIG (186 aa)). Positions 7 and 105 each coordinate Mg(2+). Residue glutamate 106 is part of the active site.

Belongs to the DNA polymerase type-Y family. Monomer. Mg(2+) serves as cofactor.

The protein resides in the cytoplasm. The enzyme catalyses DNA(n) + a 2'-deoxyribonucleoside 5'-triphosphate = DNA(n+1) + diphosphate. Functionally, poorly processive, error-prone DNA polymerase involved in untargeted mutagenesis. Copies undamaged DNA at stalled replication forks, which arise in vivo from mismatched or misaligned primer ends. These misaligned primers can be extended by PolIV. Exhibits no 3'-5' exonuclease (proofreading) activity. May be involved in translesional synthesis. In Sulfolobus acidocaldarius (strain ATCC 33909 / DSM 639 / JCM 8929 / NBRC 15157 / NCIMB 11770), this protein is DNA polymerase IV.